Here is a 464-residue protein sequence, read N- to C-terminus: Aspartyl protease 37 (464 aa).

An N-terminal signal peptide occupies residues 1–19; it reads MNAAVLLLLLALAALPASC. A glycan (N-linked (GlcNAc...) asparagine) is linked at Asn41. A Peptidase A1 domain is found at 89-456; sequence YLVKLGIGTP…NLRRGRVTFV (368 aa). Residue Asp107 is part of the active site. Cys117 and Cys123 form a disulfide bridge. Residues Asn174 and Asn261 are each glycosylated (N-linked (GlcNAc...) asparagine). Low complexity predominate over residues 299–311; that stretch reads TTTTTATATATAP. Positions 299 to 319 are disordered; the sequence is TTTTTATATATAPAPAPTPSP. A glycan (N-linked (GlcNAc...) asparagine) is linked at Asn320. Asp337 is an active-site residue. Cys376 and Cys420 are disulfide-bonded.

This sequence belongs to the peptidase A1 family.

Anther-specific aspartic protease involved in tapetal programmed cell death (PCD). Directly regulated by the transcription factor EAT1/DTD in anthers during tapetum PCD and degeneration. This Oryza sativa subsp. japonica (Rice) protein is Aspartyl protease 37.